Consider the following 115-residue polypeptide: Large ribosomal subunit protein bL19 (115 aa).

It belongs to the bacterial ribosomal protein bL19 family.

In terms of biological role, this protein is located at the 30S-50S ribosomal subunit interface and may play a role in the structure and function of the aminoacyl-tRNA binding site. The protein is Large ribosomal subunit protein bL19 of Aeromonas hydrophila subsp. hydrophila (strain ATCC 7966 / DSM 30187 / BCRC 13018 / CCUG 14551 / JCM 1027 / KCTC 2358 / NCIMB 9240 / NCTC 8049).